Consider the following 874-residue polypeptide: Lon protease (874 aa).

In terms of domain architecture, Lon N-terminal spans 18–261 (LPVLPLDDAV…RLLTWTKEHL (244 aa)). Disordered stretches follow at residues 47-68 (VDAA…GISS), 120-144 (GGVR…SGAG), and 298-318 (LSEL…EPAD). Residues 124 to 142 (PAPAGTDTTGTGTADATSG) are compositionally biased toward low complexity. 430-437 (GPPGVGKT) contacts ATP. The Lon proteolytic domain maps to 667-851 (TALPGVATGL…REVLDLALEP (185 aa)). Catalysis depends on residues serine 757 and lysine 800. The tract at residues 853–874 (FDADHGGRSPGRAGHSPTALAA) is disordered.

The protein belongs to the peptidase S16 family. Homohexamer. Organized in a ring with a central cavity.

Its subcellular location is the cytoplasm. The catalysed reaction is Hydrolysis of proteins in presence of ATP.. Its function is as follows. ATP-dependent serine protease that mediates the selective degradation of mutant and abnormal proteins as well as certain short-lived regulatory proteins. Required for cellular homeostasis and for survival from DNA damage and developmental changes induced by stress. Degrades polypeptides processively to yield small peptide fragments that are 5 to 10 amino acids long. Binds to DNA in a double-stranded, site-specific manner. The polypeptide is Lon protease (Frankia alni (strain DSM 45986 / CECT 9034 / ACN14a)).